The primary structure comprises 263 residues: Interleukin-15 receptor subunit alpha (263 aa).

Residues 1 to 32 form the signal peptide; that stretch reads MASPQLRGYGVQAIPVLLLLLLLLLLPLRVTP. The Extracellular portion of the chain corresponds to 33-205; the sequence is GTTCPPPVSI…ISPHSSKMTK (173 aa). The 65-residue stretch at 34-98 folds into the Sushi domain; that stretch reads TTCPPPVSIE…WTTPSLKCIR (65 aa). 2 cysteine pairs are disulfide-bonded: Cys-36–Cys-78 and Cys-62–Cys-96. Asn-51 is a glycosylation site (N-linked (GlcNAc...) asparagine). Over residues 113-135 the composition is skewed to low complexity; the sequence is TPKVTSQPESPSPSAKEPEAFSP. Residues 113–178 form a disordered region; the sequence is TPKVTSQPES…HKSSRAPSLA (66 aa). Residues 136-145 are compositionally biased toward polar residues; sequence KSDTAMTTET. A compositionally biased stretch (low complexity) spans 154–169; sequence TPSQTTSAGTTGTGSH. A helical transmembrane segment spans residues 206–226; it reads VAISTSVLLVGAGVVMAFLAW. At 227 to 263 the chain is on the cytoplasmic side; sequence YIKSRQPSQPCRVEVETMETVPMTVRASSKEDEDTGA.

As to quaternary structure, the interleukin-15 receptor IL15R is a heterotrimer of IL15RA, IL2RB and IL2RG. IL15RA also self-associates. Interacts with SYK. In terms of processing, N-glycosylated and O-glycosylated. A soluble form (sIL-15RA) arises from proteolytic shedding of the membrane-anchored receptor. It also binds IL15 and thus interferes with IL15 binding to the membrane receptor. Widely expressed.

The protein localises to the membrane. The protein resides in the nucleus membrane. Its subcellular location is the cell surface. It localises to the secreted. It is found in the extracellular space. Functionally, high-affinity receptor for interleukin-15. Can signal both in cis and trans where IL15R from one subset of cells presents IL15 to neighboring IL2RG-expressing cells. In neutrophils, binds and activates kinase SYK in response to IL15 stimulation. In neutrophils, required for IL15-induced phagocytosis in a SYK-dependent manner. The polypeptide is Interleukin-15 receptor subunit alpha (Il15ra) (Mus musculus (Mouse)).